Reading from the N-terminus, the 300-residue chain is Cation-efflux pump FieF (300 aa).

A run of 4 helical transmembrane segments spans residues 12–32 (AALSATALASILLIIKIFAWW), 40–60 (LAALVDSLVDLAASLTNLFVV), 82–102 (AALAQSMFISGSALFLFLTGF), and 114–134 (PSIGIGVTLVALFSTLILVTF). Zn(2+) is bound by residues aspartate 45 and aspartate 49. Histidine 153 and aspartate 157 together coordinate Zn(2+). Transmembrane regions (helical) follow at residues 155 to 175 (QSDVLMNGAILIALALSWYGF) and 178 to 198 (ADALFALGIGVYILYSALRMG).

The protein belongs to the cation diffusion facilitator (CDF) transporter (TC 2.A.4) family. FieF subfamily. In terms of assembly, homodimer.

It localises to the cell inner membrane. It catalyses the reaction Zn(2+)(in) + H(+)(out) = Zn(2+)(out) + H(+)(in). The enzyme catalyses Cd(2+)(in) + H(+)(out) = Cd(2+)(out) + H(+)(in). The catalysed reaction is Fe(2+)(in) + H(+)(out) = Fe(2+)(out) + H(+)(in). Its function is as follows. Divalent metal cation transporter which exports Zn(2+), Cd(2+) and possibly Fe(2+). May be involved in zinc and iron detoxification by efflux. This Yersinia pestis bv. Antiqua (strain Antiqua) protein is Cation-efflux pump FieF.